The primary structure comprises 382 residues: S-adenosylmethionine synthase (382 aa).

Residue His15 coordinates ATP. Position 17 (Asp17) interacts with Mg(2+). Glu43 contributes to the K(+) binding site. L-methionine-binding residues include Glu56 and Gln99. A flexible loop region spans residues 99-109; the sequence is QSPDINQGVDR. ATP is bound by residues 164-166, 230-231, Asp239, 245-246, Ala262, and Lys266; these read DAK, RF, and RK. Asp239 serves as a coordination point for L-methionine. Lys270 serves as a coordination point for L-methionine.

It belongs to the AdoMet synthase family. As to quaternary structure, homotetramer; dimer of dimers. Requires Mg(2+) as cofactor. It depends on K(+) as a cofactor.

Its subcellular location is the cytoplasm. It catalyses the reaction L-methionine + ATP + H2O = S-adenosyl-L-methionine + phosphate + diphosphate. It participates in amino-acid biosynthesis; S-adenosyl-L-methionine biosynthesis; S-adenosyl-L-methionine from L-methionine: step 1/1. Catalyzes the formation of S-adenosylmethionine (AdoMet) from methionine and ATP. The overall synthetic reaction is composed of two sequential steps, AdoMet formation and the subsequent tripolyphosphate hydrolysis which occurs prior to release of AdoMet from the enzyme. In Psychromonas ingrahamii (strain DSM 17664 / CCUG 51855 / 37), this protein is S-adenosylmethionine synthase.